Reading from the N-terminus, the 265-residue chain is tRNA pseudouridine synthase A (265 aa).

Residue aspartate 53 is the Nucleophile of the active site. Tyrosine 111 lines the substrate pocket.

It belongs to the tRNA pseudouridine synthase TruA family. In terms of assembly, homodimer.

The enzyme catalyses uridine(38/39/40) in tRNA = pseudouridine(38/39/40) in tRNA. Its function is as follows. Formation of pseudouridine at positions 38, 39 and 40 in the anticodon stem and loop of transfer RNAs. The protein is tRNA pseudouridine synthase A of Acinetobacter baumannii (strain SDF).